We begin with the raw amino-acid sequence, 161 residues long: Putative ecotin-like protein (161 aa).

Residues 1-24 form the signal peptide; that stretch reads MSLRPIETAIASLTMLMLQGCAHA.

This sequence belongs to the protease inhibitor I11 (ecotin) family.

The polypeptide is Putative ecotin-like protein (Methylobacillus flagellatus (strain ATCC 51484 / DSM 6875 / VKM B-1610 / KT)).